The primary structure comprises 202 residues: UPF0301 protein Meso_0753 (202 aa).

The protein belongs to the UPF0301 (AlgH) family.

This Chelativorans sp. (strain BNC1) protein is UPF0301 protein Meso_0753.